We begin with the raw amino-acid sequence, 119 residues long: Large ribosomal subunit protein uL14m (119 aa).

This sequence belongs to the universal ribosomal protein uL14 family.

The protein resides in the mitochondrion. The sequence is that of Large ribosomal subunit protein uL14m from Tetrahymena pyriformis.